Reading from the N-terminus, the 561-residue chain is Sesquiterpene synthase TPS2 (561 aa).

The disordered stretch occupies residues 6-26 (ANGHSDVPSTQPPIGKQKKEI). (2E,6E)-farnesyl diphosphate is bound by residues Arg-277, Asp-314, Asp-318, Arg-455, and Asp-458. Residues Asp-314 and Asp-318 each coordinate Mg(2+). The DDXXD motif signature appears at 314–318 (DDTYD). Residues Asp-458, Ser-462, and Glu-466 each contribute to the Mg(2+) site.

It belongs to the terpene synthase family. Tpsa subfamily. In terms of assembly, monomer. The cofactor is Mg(2+).

The protein resides in the cytoplasm. It carries out the reaction (2E,6E)-farnesyl diphosphate = beta-ylangene + diphosphate. The enzyme catalyses (2E,6E)-farnesyl diphosphate = beta-copaene + diphosphate. The catalysed reaction is (2E,6E)-farnesyl diphosphate = beta-cubebene + diphosphate. It participates in secondary metabolite biosynthesis; terpenoid biosynthesis. Functionally, sesquiterpene synthase involved in the biosynthesis of volatile organic compounds. Mediates the conversion of (2E,6E)-farnesyl diphosphate (FPP) into beta-ylangene, beta-copaene and beta-cubebene. Does not use (2E)-geranyl diphosphate (GPP) as substrate. This Cananga odorata (Ylang-ylang tree) protein is Sesquiterpene synthase TPS2.